We begin with the raw amino-acid sequence, 347 residues long: tRNA N6-adenosine threonylcarbamoyltransferase (347 aa).

2 residues coordinate Fe cation: H111 and H115. Substrate contacts are provided by residues 134 to 138 (LVSGG), D167, G180, and N276. Residue D304 coordinates Fe cation.

This sequence belongs to the KAE1 / TsaD family. The cofactor is Fe(2+).

The protein resides in the cytoplasm. The enzyme catalyses L-threonylcarbamoyladenylate + adenosine(37) in tRNA = N(6)-L-threonylcarbamoyladenosine(37) in tRNA + AMP + H(+). In terms of biological role, required for the formation of a threonylcarbamoyl group on adenosine at position 37 (t(6)A37) in tRNAs that read codons beginning with adenine. Is involved in the transfer of the threonylcarbamoyl moiety of threonylcarbamoyl-AMP (TC-AMP) to the N6 group of A37, together with TsaE and TsaB. TsaD likely plays a direct catalytic role in this reaction. The protein is tRNA N6-adenosine threonylcarbamoyltransferase of Nitrosospira multiformis (strain ATCC 25196 / NCIMB 11849 / C 71).